A 365-amino-acid polypeptide reads, in one-letter code: Phosphate acyltransferase (365 aa).

The protein belongs to the PlsX family. Homodimer. Probably interacts with PlsY.

The protein localises to the cytoplasm. It catalyses the reaction a fatty acyl-[ACP] + phosphate = an acyl phosphate + holo-[ACP]. Its pathway is lipid metabolism; phospholipid metabolism. Functionally, catalyzes the reversible formation of acyl-phosphate (acyl-PO(4)) from acyl-[acyl-carrier-protein] (acyl-ACP). This enzyme utilizes acyl-ACP as fatty acyl donor, but not acyl-CoA. The sequence is that of Phosphate acyltransferase from Klebsiella pneumoniae (strain 342).